The primary structure comprises 244 residues: Acetoacetate decarboxylase (244 aa).

Residue lysine 115 is the Schiff-base intermediate with acetoacetate of the active site.

This sequence belongs to the ADC family. As to quaternary structure, homododecamer.

It catalyses the reaction acetoacetate + H(+) = acetone + CO2. Functionally, catalyzes the conversion of acetoacetate to acetone and carbon dioxide. The sequence is that of Acetoacetate decarboxylase from Clostridium acetobutylicum (strain ATCC 824 / DSM 792 / JCM 1419 / IAM 19013 / LMG 5710 / NBRC 13948 / NRRL B-527 / VKM B-1787 / 2291 / W).